A 343-amino-acid chain; its full sequence is S-adenosylmethionine:tRNA ribosyltransferase-isomerase (343 aa).

The protein belongs to the QueA family. In terms of assembly, monomer.

It localises to the cytoplasm. It carries out the reaction 7-aminomethyl-7-carbaguanosine(34) in tRNA + S-adenosyl-L-methionine = epoxyqueuosine(34) in tRNA + adenine + L-methionine + 2 H(+). The protein operates within tRNA modification; tRNA-queuosine biosynthesis. Its function is as follows. Transfers and isomerizes the ribose moiety from AdoMet to the 7-aminomethyl group of 7-deazaguanine (preQ1-tRNA) to give epoxyqueuosine (oQ-tRNA). In Coxiella burnetii (strain RSA 331 / Henzerling II), this protein is S-adenosylmethionine:tRNA ribosyltransferase-isomerase.